A 91-amino-acid polypeptide reads, in one-letter code: PqqA binding protein (91 aa).

This sequence belongs to the PqqD family. As to quaternary structure, monomer. Interacts with PqqE.

The protein operates within cofactor biosynthesis; pyrroloquinoline quinone biosynthesis. Functions as a PqqA binding protein and presents PqqA to PqqE, in the pyrroloquinoline quinone (PQQ) biosynthetic pathway. This chain is PqqA binding protein, found in Pseudomonas fluorescens (strain SBW25).